Reading from the N-terminus, the 581-residue chain is Kelch-like protein 38 (581 aa).

The region spanning 34-101 (TDVSICAGAR…VYTGEAHIAT (68 aa)) is the BTB domain. In terms of domain architecture, BACK spans 136 to 237 (CLGMIRLSEI…HPAFFHHFIA (102 aa)). Kelch repeat units follow at residues 285–332 (FLIL…TLHR), 334–383 (IYVL…AHKN), 384–431 (FIFS…VKDQ), 433–479 (LYLF…VLGE), 480–521 (RIVI…VMGN), and 523–573 (LYVT…TLQC).

The polypeptide is Kelch-like protein 38 (KLHL38) (Homo sapiens (Human)).